The following is a 1361-amino-acid chain: Pre-mRNA-splicing factor RSE1 (1361 aa).

Disordered regions lie at residues 788–811 (NNEE…INSS) and 893–912 (VNKQ…EDEM). Composition is skewed to acidic residues over residues 789–808 (NEEE…EEEI) and 903–912 (ESNEEEEDEM).

It belongs to the RSE1 family. In terms of assembly, belongs to the SF3B complex, a U2 associated sub-complex of the spliceosome. The SF3B complex is composed of at least CUS1, HSH49, HSH155, RDS3 and RSE1. Also belongs to the CWC complex (or CEF1-associated complex), a spliceosome sub-complex reminiscent of a late-stage spliceosome composed of the U2, U5 and U6 snRNAs and at least BUD13, BUD31, BRR2, CDC40, CEF1, CLF1, CUS1, CWC2, CWC15, CWC21, CWC22, CWC23, CWC24, CWC25, CWC27, ECM2, HSH155, IST3, ISY1, LEA1, MSL1, NTC20, PRP8, PRP9, PRP11, PRP19, PRP21, PRP22, PRP45, PRP46, SLU7, SMB1, SMD1, SMD2, SMD3, SMX2, SMX3, SNT309, SNU114, SPP2, SYF1, SYF2, RSE1 and YJU2. Interacts with RDS3.

It is found in the nucleus. Functionally, involved in G2/M transition. Required for pre-mRNA splicing and endoplasmic reticulum (ER) to Golgi secretion pathway. U2 snRNPs associated protein required for the pre-spliceosome assembly. The involvement in ER to Golgi secretion is probably indirect and due to the splicing of the pre-mRNA coding for SAR1, a small GTP-binding protein required for COPII vesicle formation from the ER. The protein is Pre-mRNA-splicing factor RSE1 (RSE1) of Saccharomyces cerevisiae (strain ATCC 204508 / S288c) (Baker's yeast).